A 571-amino-acid polypeptide reads, in one-letter code: Putative fatty-acid--CoA ligase fadD11 (571 aa).

Positions 1–19 (MARLRGAGAAGRCRPGRFG) are enriched in low complexity. Disordered regions lie at residues 1–35 (MARL…EPDR) and 67–91 (RQRG…RCAH). The segment covering 78-91 (ATVRRSRSRQRCAH) has biased composition (basic residues). The next 2 helical transmembrane spans lie at 314–334 (TLAF…MSEL) and 431–451 (ANIE…MAIG).

Belongs to the ATP-dependent AMP-binding enzyme family.

It localises to the cell membrane. The chain is Putative fatty-acid--CoA ligase fadD11 (fadD11) from Mycobacterium tuberculosis (strain CDC 1551 / Oshkosh).